Consider the following 478-residue polypeptide: Transposase for insertion sequence element IS231B (478 aa).

This sequence belongs to the transposase 11 family.

In terms of biological role, involved in the transposition of the insertion sequence. This is Transposase for insertion sequence element IS231B from Bacillus thuringiensis subsp. berliner.